The primary structure comprises 99 residues: Imizoquin biosynthesis cluster protein A (99 aa).

Its pathway is secondary metabolite biosynthesis. Part of the gene cluster that mediates the biosynthesis of imizoquins A to D, tripeptide-derived alkaloids that serve a protective role against oxidative stress that are essential for normal germination. ImqB is a canonical three-module NRPS that assembles the tripeptide backbone of the imizoquins via condensation of Trp, Tyr, and Leu-derived precursors. N-methylation by imqF and phenol oxidation by imqC, followed by cyclization via the FAD-dependent oxidase imqH carry out the three-step transformation of L-tyrosine into tetrahydroisoquinoline. Importantly, this sequence requires the presence of a free amine in the tyrosine moiety, indicating that isoquinoline formation occurs prior to peptide bond formation. The imidazolidin-4-one ring of imizoquins could form following additional oxidation of the methyl-derived bridgehead carbon by imqH. Lastly, O-methylation by imqG and leucine hydroxylation by imqE complete biosynthesis of the imizoquins. This is Imizoquin biosynthesis cluster protein A from Aspergillus flavus (strain ATCC 200026 / FGSC A1120 / IAM 13836 / NRRL 3357 / JCM 12722 / SRRC 167).